Here is a 161-residue protein sequence, read N- to C-terminus: Protein PLASTID TRANSCRIPTIONALLY ACTIVE 7 (161 aa).

Residues 1 to 32 constitute a chloroplast transit peptide; that stretch reads MASFTCSSPSSILPIIDTRSGNLRCTFQSQVS.

Component of the transcriptionally active chromosome (TAC) complexes. Interacts with FLN1, PTAC10, PTAC12/HMR/PAP5 and PTAC14. Binds to SL1/MTERF3. As to expression, mostly expressed in leaves, flowers and seedlings, and, to a lower extent, in roots and stems.

Its subcellular location is the plastid. The protein resides in the chloroplast. Functionally, essential for chloroplast development, especially for thylakoid formation. Involved in plastid gene expression, probably by maintaining plastid-encoded RNA polymerase (PEP) activity. The sequence is that of Protein PLASTID TRANSCRIPTIONALLY ACTIVE 7 from Arabidopsis thaliana (Mouse-ear cress).